Here is a 520-residue protein sequence, read N- to C-terminus: Putative tyrosine carboxypeptidase MATCAP2 (520 aa).

Positions glutamate 116–lysine 153 are disordered. Zn(2+) is bound at residue histidine 331. Glutamate 332 serves as the catalytic Nucleophile. 2 residues coordinate Zn(2+): histidine 336 and glutamate 367.

Zn(2+) serves as cofactor.

Its function is as follows. Putative tyrosine carboxypeptidase. The protein is Putative tyrosine carboxypeptidase MATCAP2 of Homo sapiens (Human).